The chain runs to 370 residues: Phenylalanine dehydrogenase (370 aa).

An NAD(+)-binding site is contributed by Arg44. Lys68 is a binding site for L-phenylalanine. The Proton donor/acceptor role is filled by Lys80. 114-115 lines the L-phenylalanine pocket; sequence TD. NAD(+) is bound by residues Asp115, Ser146, Thr150, 180–186, 203–204, 243–244, and 264–266; these read GLGKVGF, DV, AI, and AAN. Position 266 (Asn266) interacts with L-phenylalanine.

It belongs to the Glu/Leu/Phe/Val dehydrogenases family.

The enzyme catalyses L-phenylalanine + NAD(+) + H2O = 3-phenylpyruvate + NH4(+) + NADH + H(+). The protein operates within amino-acid biosynthesis; L-phenylalanine biosynthesis; L-phenylalanine from phenylpyruvate (PDH route): step 1/1. Catalyzes the reversible NAD(+)-dependent oxidative deamination of L-phenylalanine to phenylpyruvate. The sequence is that of Phenylalanine dehydrogenase from Caldalkalibacillus thermarum (strain TA2.A1).